Consider the following 355-residue polypeptide: Uroporphyrinogen decarboxylase (355 aa).

Residues 27–31, aspartate 77, tyrosine 154, threonine 209, and histidine 327 each bind substrate; that span reads RQAGR.

It belongs to the uroporphyrinogen decarboxylase family. In terms of assembly, homodimer.

It is found in the cytoplasm. It catalyses the reaction uroporphyrinogen III + 4 H(+) = coproporphyrinogen III + 4 CO2. Its pathway is porphyrin-containing compound metabolism; protoporphyrin-IX biosynthesis; coproporphyrinogen-III from 5-aminolevulinate: step 4/4. Functionally, catalyzes the decarboxylation of four acetate groups of uroporphyrinogen-III to yield coproporphyrinogen-III. This Yersinia enterocolitica serotype O:8 / biotype 1B (strain NCTC 13174 / 8081) protein is Uroporphyrinogen decarboxylase.